The chain runs to 319 residues: Phosphate transport system permease protein PstC (319 aa).

Topologically, residues 1–24 (MAATKPAFNPPGKKGDIIFSVLVK) are cytoplasmic. A helical membrane pass occupies residues 25–44 (LAALIVLLMLGGIIVSLIIS). At 45-74 (SWPSIQKFGLAFLWTKEWDAPNDIYGALVP) the chain is on the periplasmic side. A helical transmembrane segment spans residues 75–94 (IYGTLVTSFIALLIAVPVSF). Residues 75 to 305 (IYGTLVTSFI…VITFIVLAAS (231 aa)) enclose the ABC transmembrane type-1 domain. The Cytoplasmic portion of the chain corresponds to 95-117 (GIALFLTELAPGWLKRPLGIAIE). Residues 118–137 (LLAAIPSIVYGMWGLFIFAP) traverse the membrane as a helical segment. Over 138–167 (LFAVYFQEPVGNIMSNIPIVGALFSGPAFG) the chain is Periplasmic. A helical membrane pass occupies residues 168–187 (IGILAAGVILAIMIIPYIAA). Residues 188–232 (VMRDVFEQTPVMMKESAYGIGCTTWEVIWRIVLPFTKNGVIGGIM) are Cytoplasmic-facing. A helical membrane pass occupies residues 233–252 (LGLGRALGETMAVTFIIGNT). Over 253–283 (YQLDSASLYMPGNSITSALANEFAEAESGLH) the chain is Periplasmic. A helical membrane pass occupies residues 284–303 (VAALMELGLILFVITFIVLA). The Cytoplasmic portion of the chain corresponds to 304 to 319 (ASKFMIMRLAKNEGAR).

Belongs to the binding-protein-dependent transport system permease family. CysTW subfamily.

It is found in the cell inner membrane. Functionally, part of the binding-protein-dependent transport system for phosphate; probably responsible for the translocation of the substrate across the membrane. The sequence is that of Phosphate transport system permease protein PstC (pstC) from Escherichia coli O157:H7.